A 406-amino-acid polypeptide reads, in one-letter code: Succinylornithine transaminase (406 aa).

Lysine 252 carries the post-translational modification N6-(pyridoxal phosphate)lysine.

The protein belongs to the class-III pyridoxal-phosphate-dependent aminotransferase family. AstC subfamily. Pyridoxal 5'-phosphate serves as cofactor.

It catalyses the reaction N(2)-succinyl-L-ornithine + 2-oxoglutarate = N-succinyl-L-glutamate 5-semialdehyde + L-glutamate. The protein operates within amino-acid degradation; L-arginine degradation via AST pathway; L-glutamate and succinate from L-arginine: step 3/5. Its function is as follows. Catalyzes the transamination of N(2)-succinylornithine and alpha-ketoglutarate into N(2)-succinylglutamate semialdehyde and glutamate. Can also act as an acetylornithine aminotransferase. The polypeptide is Succinylornithine transaminase (Escherichia coli (strain 55989 / EAEC)).